Reading from the N-terminus, the 962-residue chain is Protein suppressor of underreplication (962 aa).

Disordered stretches follow at residues 353–413 (EIVT…TRAA), 438–590 (TPTP…LSGS), 658–712 (NSSH…SPDL), 866–900 (QERTQPSNGNRNSIVASLRKSPKSPKHGARTTQAT), and 916–962 (QTSS…ELFK). Basic residues predominate over residues 372 to 382 (PRTKSKKKCSK). Residues 386 to 395 (PCKEADLTDS) are compositionally biased toward basic and acidic residues. Composition is skewed to polar residues over residues 438-448 (TPTPSGATTAI) and 480-489 (LTRSAESKIN). The segment covering 524–552 (VKQESKAKAKPEQKKKIKTVDKPAQETPK) has biased composition (basic and acidic residues). Over residues 553–562 (RKPGRPRKCK) the composition is skewed to basic residues. The span at 564-576 (LTETLGKSKTKPN) shows a compositional bias: polar residues. Positions 673–683 (RRTKALKRKRK) are enriched in basic residues. 2 stretches are compositionally biased toward polar residues: residues 703–712 (RSATNKSPDL) and 866–880 (QERTQPSNGNRNSIV). Basic residues predominate over residues 885–894 (KSPKSPKHGA). The span at 916–944 (QTSSVESVSAPSTPVNPSTSAAACQTRTA) shows a compositional bias: polar residues. Over residues 953–962 (TKRKRLELFK) the composition is skewed to basic residues.

Its subcellular location is the nucleus. The protein resides in the chromosome. Required for underreplication of DNA, which is found in many late replicating euchromatic regions of salivary gland polytene chromosomes. Controls chromatin organization in polytene chromosomes. The sequence is that of Protein suppressor of underreplication (SuUR) from Drosophila erecta (Fruit fly).